The primary structure comprises 360 residues: Mannan endo-1,4-beta-mannosidase (360 aa).

A signal peptide spans 1 to 24; that stretch reads MLKKLAVCLSIVLLLLGAASPISA. One can recognise a GH26 domain in the interval 36–347; the sequence is QTTKDIMNWL…YQNSWTLNKG (312 aa). His129 is a binding site for substrate. The active-site Proton donor is the Glu191. Trp196 and Tyr266 together coordinate substrate. Catalysis depends on Glu290, which acts as the Nucleophile.

The protein belongs to the glycosyl hydrolase 26 family. Homodimer.

The protein resides in the secreted. It catalyses the reaction Random hydrolysis of (1-&gt;4)-beta-D-mannosidic linkages in mannans, galactomannans and glucomannans.. Functionally, involved in the degradation of glucomannan. Catalyzes the endo hydrolysis of beta-1,4-linked mannan, galactomannan and glucomannan. The sequence is that of Mannan endo-1,4-beta-mannosidase from Bacillus subtilis.